A 588-amino-acid polypeptide reads, in one-letter code: A-type ATP synthase subunit A 3 (588 aa).

234–241 contributes to the ATP binding site; the sequence is GPFGSGKT.

It belongs to the ATPase alpha/beta chains family. In terms of assembly, has multiple subunits with at least A(3), B(3), C, D, E, F, H, I and proteolipid K(x).

The protein resides in the cell membrane. The enzyme catalyses ATP + H2O + 4 H(+)(in) = ADP + phosphate + 5 H(+)(out). Functionally, component of the A-type ATP synthase that produces ATP from ADP in the presence of a proton gradient across the membrane. The A chain is the catalytic subunit. The protein is A-type ATP synthase subunit A 3 of Methanospirillum hungatei JF-1 (strain ATCC 27890 / DSM 864 / NBRC 100397 / JF-1).